We begin with the raw amino-acid sequence, 147 residues long: Hemoglobin subunit beta-3 (147 aa).

Positions 3-147 (HWTAEEKAVI…LVDALSHSYH (145 aa)) constitute a Globin domain. Residues histidine 64 and histidine 93 each coordinate heme b.

It belongs to the globin family. Heterotetramer of two alpha chains and two beta chains. As to expression, red blood cells.

Functionally, this is a tadpole (larval) beta chain. The chain is Hemoglobin subunit beta-3 from Aquarana catesbeiana (American bullfrog).